The chain runs to 205 residues: Probable GTP-binding protein EngB (205 aa).

Residues 22-196 (NLPEVAFVGR…LKVLDEFIHK (175 aa)) form the EngB-type G domain. GTP is bound by residues 30–37 (GRSNVGKS), 57–61 (GRTQL), 76–79 (DLPG), 143–146 (TKVD), and 175–177 (FSA). The Mg(2+) site is built by serine 37 and threonine 59.

This sequence belongs to the TRAFAC class TrmE-Era-EngA-EngB-Septin-like GTPase superfamily. EngB GTPase family. The cofactor is Mg(2+).

Functionally, necessary for normal cell division and for the maintenance of normal septation. This Desulforamulus reducens (strain ATCC BAA-1160 / DSM 100696 / MI-1) (Desulfotomaculum reducens) protein is Probable GTP-binding protein EngB.